A 356-amino-acid polypeptide reads, in one-letter code: V-type proton ATPase subunit d (356 aa).

The protein belongs to the V-ATPase V0D/AC39 subunit family. In terms of assembly, V-ATPase is a heteromultimeric enzyme composed of a peripheral catalytic V1 complex (components A to H) attached to an integral membrane V0 proton pore complex (components: a, c, c', c'' and d).

Subunit of the integral membrane V0 complex of vacuolar ATPase. Vacuolar ATPase is responsible for acidifying a variety of intracellular compartments in eukaryotic cells, thus providing most of the energy required for transport processes in the vacuolar system. This is V-type proton ATPase subunit d (vatD-1) from Dictyostelium discoideum (Social amoeba).